A 110-amino-acid polypeptide reads, in one-letter code: Thiosulfate sulfurtransferase GlpE (110 aa).

In terms of domain architecture, Rhodanese spans 17–105 (KKEGAVVVDI…WRATYPAETA (89 aa)). Cys-65 acts as the Cysteine persulfide intermediate in catalysis.

This sequence belongs to the GlpE family.

Its subcellular location is the cytoplasm. The enzyme catalyses thiosulfate + hydrogen cyanide = thiocyanate + sulfite + 2 H(+). It carries out the reaction thiosulfate + [thioredoxin]-dithiol = [thioredoxin]-disulfide + hydrogen sulfide + sulfite + 2 H(+). In terms of biological role, transferase that catalyzes the transfer of sulfur from thiosulfate to thiophilic acceptors such as cyanide or dithiols. May function in a CysM-independent thiosulfate assimilation pathway by catalyzing the conversion of thiosulfate to sulfite, which can then be used for L-cysteine biosynthesis. This is Thiosulfate sulfurtransferase GlpE from Pseudomonas putida (strain ATCC 700007 / DSM 6899 / JCM 31910 / BCRC 17059 / LMG 24140 / F1).